Here is a 231-residue protein sequence, read N- to C-terminus: Chlorophyll a-b binding protein 1B-20, chloroplastic (231 aa).

The interval 1-25 (RIQAYRFRTRVPPSPAASGSPRSTR) is disordered. The transit peptide at 1–31 (RIQAYRFRTRVPPSPAASGSPRSTRRDVAVQ) directs the protein to the chloroplast. Trp36 contacts chlorophyll b. Residue Phe56 participates in chlorophyll a binding. 4 residues coordinate chlorophyll b: Arg80, Ser118, Glu133, and Arg136. Chlorophyll a contacts are provided by Lys182, Glu183, Asn186, Arg188, Gln200, and His215. The helical transmembrane segment at 183–199 (ELANGRLAMLAFLGFLV) threads the bilayer.

The protein belongs to the light-harvesting chlorophyll a/b-binding (LHC) protein family. In terms of assembly, the LHC complex consists of chlorophyll a-b binding proteins. The cofactor is Binds at least 14 chlorophylls (8 Chl-a and 6 Chl-b) and carotenoids such as lutein and neoxanthin.. Photoregulated by reversible phosphorylation of its threonine residues.

The protein localises to the plastid. It localises to the chloroplast thylakoid membrane. The light-harvesting complex (LHC) functions as a light receptor, it captures and delivers excitation energy to photosystems with which it is closely associated. In Hordeum vulgare (Barley), this protein is Chlorophyll a-b binding protein 1B-20, chloroplastic (LHC Ib-20).